We begin with the raw amino-acid sequence, 404 residues long: uncharacterized protein (404 aa).

This sequence belongs to the lymphocryptovirus BTRF1 family.

This is an uncharacterized protein from Homo sapiens (Human).